A 270-amino-acid chain; its full sequence is 4-hydroxy-tetrahydrodipicolinate reductase (270 aa).

Residues 9–14 (GAGGRM) and E35 each bind NAD(+). Residue R36 participates in NADP(+) binding. NAD(+)-binding positions include 99–101 (GTT) and 123–126 (ASNF). Catalysis depends on H156, which acts as the Proton donor/acceptor. (S)-2,3,4,5-tetrahydrodipicolinate is bound at residue H157. The Proton donor role is filled by K160. 166-167 (GT) contacts (S)-2,3,4,5-tetrahydrodipicolinate.

Belongs to the DapB family.

The protein resides in the cytoplasm. The catalysed reaction is (S)-2,3,4,5-tetrahydrodipicolinate + NAD(+) + H2O = (2S,4S)-4-hydroxy-2,3,4,5-tetrahydrodipicolinate + NADH + H(+). It catalyses the reaction (S)-2,3,4,5-tetrahydrodipicolinate + NADP(+) + H2O = (2S,4S)-4-hydroxy-2,3,4,5-tetrahydrodipicolinate + NADPH + H(+). Its pathway is amino-acid biosynthesis; L-lysine biosynthesis via DAP pathway; (S)-tetrahydrodipicolinate from L-aspartate: step 4/4. Its function is as follows. Catalyzes the conversion of 4-hydroxy-tetrahydrodipicolinate (HTPA) to tetrahydrodipicolinate. The sequence is that of 4-hydroxy-tetrahydrodipicolinate reductase from Haemophilus influenzae (strain PittGG).